A 232-amino-acid polypeptide reads, in one-letter code: 2,3-bisphosphoglycerate-dependent phosphoglycerate mutase (232 aa).

Residues 10–17 (RHGESIWN), 23–24 (TG), Arg62, 89–92 (ERHY), Lys100, 116–117 (RR), and 185–186 (GN) contribute to the substrate site. His11 functions as the Tele-phosphohistidine intermediate in the catalytic mechanism. Glu89 functions as the Proton donor/acceptor in the catalytic mechanism.

It belongs to the phosphoglycerate mutase family. BPG-dependent PGAM subfamily. In terms of assembly, homodimer.

The enzyme catalyses (2R)-2-phosphoglycerate = (2R)-3-phosphoglycerate. The protein operates within carbohydrate degradation; glycolysis; pyruvate from D-glyceraldehyde 3-phosphate: step 3/5. Catalyzes the interconversion of 2-phosphoglycerate and 3-phosphoglycerate. In Buchnera aphidicola subsp. Baizongia pistaciae (strain Bp), this protein is 2,3-bisphosphoglycerate-dependent phosphoglycerate mutase.